The sequence spans 97 residues: YcgL domain-containing protein CPS_3517 (97 aa).

In terms of domain architecture, YcgL spans Met1–Lys85.

The protein is YcgL domain-containing protein CPS_3517 of Colwellia psychrerythraea (strain 34H / ATCC BAA-681) (Vibrio psychroerythus).